A 279-amino-acid chain; its full sequence is Eukaryotic translation initiation factor 3 subunit J (279 aa).

Disordered stretches follow at residues 1–74 (MSWD…SQKS) and 229–279 (ERQA…DDFM). A compositionally biased stretch (acidic residues) spans 20–39 (WEDEDNDDPLLESWDIDEEE). Positions 34–74 (DIDEEEVARKKKEEEAKKKAEKEALKQKQQEAKNKKLSQKS) form a coiled coil. Positions 40-67 (VARKKKEEEAKKKAEKEALKQKQQEAKN) are enriched in basic and acidic residues. Positions 268–279 (DDFDDFDDDDFM) are enriched in acidic residues.

Belongs to the eIF-3 subunit J family. In terms of assembly, component of the eukaryotic translation initiation factor 3 (eIF-3) complex.

The protein resides in the cytoplasm. Its function is as follows. Component of the eukaryotic translation initiation factor 3 (eIF-3) complex, which is involved in protein synthesis of a specialized repertoire of mRNAs and, together with other initiation factors, stimulates binding of mRNA and methionyl-tRNAi to the 40S ribosome. The eIF-3 complex specifically targets and initiates translation of a subset of mRNAs involved in cell proliferation. The sequence is that of Eukaryotic translation initiation factor 3 subunit J from Meyerozyma guilliermondii (strain ATCC 6260 / CBS 566 / DSM 6381 / JCM 1539 / NBRC 10279 / NRRL Y-324) (Yeast).